An 835-amino-acid polypeptide reads, in one-letter code: Protein translocase subunit SecA (835 aa).

Residues glutamine 85, 103–107 (GEGKT), and aspartate 492 contribute to the ATP site. Residues 788–807 (VQGEAVHPSSDGEEAKKKPV) are disordered. Zn(2+) is bound by residues cysteine 819, cysteine 821, cysteine 830, and cysteine 831.

Belongs to the SecA family. In terms of assembly, monomer and homodimer. Part of the essential Sec protein translocation apparatus which comprises SecA, SecYEG and auxiliary proteins SecDF. Other proteins may also be involved. The cofactor is Zn(2+).

It localises to the cell membrane. The protein resides in the cytoplasm. It carries out the reaction ATP + H2O + cellular proteinSide 1 = ADP + phosphate + cellular proteinSide 2.. Part of the Sec protein translocase complex. Interacts with the SecYEG preprotein conducting channel. Has a central role in coupling the hydrolysis of ATP to the transfer of proteins into and across the cell membrane, serving as an ATP-driven molecular motor driving the stepwise translocation of polypeptide chains across the membrane. The protein is Protein translocase subunit SecA of Bacillus cereus (strain G9842).